We begin with the raw amino-acid sequence, 353 residues long: Photosystem II protein D1 (353 aa).

T2 carries the post-translational modification N-acetylthreonine. Residue T2 is modified to Phosphothreonine. A run of 3 helical transmembrane segments spans residues 29–46, 118–133, and 142–156; these read YIGW…TATS, HFLL…EWEL, and WIAV…AATA. Residue H118 coordinates chlorophyll a. Residue Y126 participates in pheophytin a binding. [CaMn4O5] cluster contacts are provided by D170 and E189. A helical transmembrane segment spans residues 197–218; the sequence is FHMLGVAGVFGGSLFSAMHGSL. H198 contacts chlorophyll a. Residues H215 and 264 to 265 each bind a quinone; that span reads SF. H215 is a binding site for Fe cation. H272 lines the Fe cation pocket. A helical transmembrane segment spans residues 274–288; sequence FLAAWPVVGIWFTAL. Residues H332, E333, D342, and A344 each coordinate [CaMn4O5] cluster. Positions 345-353 are excised as a propeptide; sequence AIEAPATNG.

This sequence belongs to the reaction center PufL/M/PsbA/D family. In terms of assembly, PSII is composed of 1 copy each of membrane proteins PsbA, PsbB, PsbC, PsbD, PsbE, PsbF, PsbH, PsbI, PsbJ, PsbK, PsbL, PsbM, PsbT, PsbX, PsbY, PsbZ, Psb30/Ycf12, at least 3 peripheral proteins of the oxygen-evolving complex and a large number of cofactors. It forms dimeric complexes. The D1/D2 heterodimer binds P680, chlorophylls that are the primary electron donor of PSII, and subsequent electron acceptors. It shares a non-heme iron and each subunit binds pheophytin, quinone, additional chlorophylls, carotenoids and lipids. D1 provides most of the ligands for the Mn4-Ca-O5 cluster of the oxygen-evolving complex (OEC). There is also a Cl(-1) ion associated with D1 and D2, which is required for oxygen evolution. The PSII complex binds additional chlorophylls, carotenoids and specific lipids. is required as a cofactor. Post-translationally, tyr-161 forms a radical intermediate that is referred to as redox-active TyrZ, YZ or Y-Z. In terms of processing, C-terminally processed by CTPA; processing is essential to allow assembly of the oxygen-evolving complex and thus photosynthetic growth.

The protein localises to the plastid membrane. The enzyme catalyses 2 a plastoquinone + 4 hnu + 2 H2O = 2 a plastoquinol + O2. Its function is as follows. Photosystem II (PSII) is a light-driven water:plastoquinone oxidoreductase that uses light energy to abstract electrons from H(2)O, generating O(2) and a proton gradient subsequently used for ATP formation. It consists of a core antenna complex that captures photons, and an electron transfer chain that converts photonic excitation into a charge separation. The D1/D2 (PsbA/PsbD) reaction center heterodimer binds P680, the primary electron donor of PSII as well as several subsequent electron acceptors. In Cuscuta reflexa (Southern Asian dodder), this protein is Photosystem II protein D1.